The sequence spans 157 residues: Vesicle transport protein SFT2B (157 aa).

At Met1 the chain carries N-acetylmethionine. The Cytoplasmic portion of the chain corresponds to 1 to 36; it reads MDKLKKVLSGQDTEDRSGLSEVVESSSLSWSTRIKG. A Phosphoserine modification is found at Ser9. Residues 37–57 form a helical membrane-spanning segment; sequence FIVCFALGILCSLLGTLLLWV. Topologically, residues 58 to 61 are lumenal; it reads SRKG. The chain crosses the membrane as a helical span at residues 62–82; it reads LFAVFYTLGNITSIGSTMFLM. Residues 83–96 are Cytoplasmic-facing; the sequence is GPLKQLKRMFEPTR. Residues 97–117 traverse the membrane as a helical segment; sequence LIATILVLLFFVLTLCSAFLW. The Lumenal portion of the chain corresponds to 118–120; the sequence is NKG. Residues 121–141 form a helical membrane-spanning segment; that stretch reads LALIFCILQSLALTWYSLSYI. Over 142-157 the chain is Cytoplasmic; it reads PYARDAVKKCFAVCLT.

This sequence belongs to the SFT2 family.

Its subcellular location is the membrane. Functionally, may be involved in fusion of retrograde transport vesicles derived from an endocytic compartment with the Golgi complex. The chain is Vesicle transport protein SFT2B from Rattus norvegicus (Rat).